The chain runs to 383 residues: MKEADLITLRRQLHQIPELALQEKETHALLLKTIQGLPQTYLTIRTLPDLPTALLVKVQGRDPQRTIGYRTDIDALPVTEKTGLPFASKHSGIAHACGHDIHMTVALGILSYFAEHQPKDNLIFFFQPAEESKNGGKLAYDMGAFTGDWHIDEFYGLHDRPDLPAGTISTRLGTLFAGTTEINVDLIGKSGHAALPQNANDMIVAAASFISQIQTVVARNVGPTDSAVITFGLMRAGTIRNVIAGRAHLEGTLRGFTQQQIDFLQQRIRDIGQGIAASFNCQVKVALNQGGYYPVENNDKLTKDFIQVMKDDPDVTFVDTKPVMTGEDFGYLLNKIPGTMFWLGVNDPDSQLHAADFSPDEAALVPGVTAVVHFLEHRMLEKV.

Residue Asp72 is part of the active site. The Proton acceptor role is filled by Glu131.

It belongs to the peptidase M20A family. N-acetyldiaminopimelate deacetylase subfamily.

The enzyme catalyses N-acetyl-(2S,6S)-2,6-diaminopimelate + H2O = (2S,6S)-2,6-diaminopimelate + acetate. The protein operates within amino-acid biosynthesis; L-lysine biosynthesis via DAP pathway; LL-2,6-diaminopimelate from (S)-tetrahydrodipicolinate (acetylase route): step 3/3. Functionally, catalyzes the conversion of N-acetyl-diaminopimelate to diaminopimelate and acetate. The polypeptide is N-acetyldiaminopimelate deacetylase (Lacticaseibacillus casei (strain BL23) (Lactobacillus casei)).